Reading from the N-terminus, the 451-residue chain is tRNA-2-methylthio-N(6)-dimethylallyladenosine synthase (451 aa).

In terms of domain architecture, MTTase N-terminal spans 11–127 (RHYHITTFGC…LEDLLQQVFD (117 aa)). 6 residues coordinate [4Fe-4S] cluster: cysteine 20, cysteine 56, cysteine 90, cysteine 162, cysteine 166, and cysteine 169. In terms of domain architecture, Radical SAM core spans 148-385 (RDSTITAWVN…NHLVAQKAAE (238 aa)). In terms of domain architecture, TRAM spans 388 to 451 (QRYLGRIEEV…RAFSLTGEIV (64 aa)).

It belongs to the methylthiotransferase family. MiaB subfamily. As to quaternary structure, monomer. The cofactor is [4Fe-4S] cluster.

It is found in the cytoplasm. It carries out the reaction N(6)-dimethylallyladenosine(37) in tRNA + (sulfur carrier)-SH + AH2 + 2 S-adenosyl-L-methionine = 2-methylsulfanyl-N(6)-dimethylallyladenosine(37) in tRNA + (sulfur carrier)-H + 5'-deoxyadenosine + L-methionine + A + S-adenosyl-L-homocysteine + 2 H(+). Functionally, catalyzes the methylthiolation of N6-(dimethylallyl)adenosine (i(6)A), leading to the formation of 2-methylthio-N6-(dimethylallyl)adenosine (ms(2)i(6)A) at position 37 in tRNAs that read codons beginning with uridine. This is tRNA-2-methylthio-N(6)-dimethylallyladenosine synthase from Rippkaea orientalis (strain PCC 8801 / RF-1) (Cyanothece sp. (strain PCC 8801)).